Consider the following 941-residue polypeptide: Cell wall protein IFF9 (941 aa).

Residues 1–20 (MQLFQNILVSIALLTQIVFA) form the signal peptide. Residue Asn917 is the site of GPI-anchor amidated asparagine attachment. The propeptide at 918–941 (GSNKESIENIKYLALVVFGLMMFM) is removed in mature form.

This sequence belongs to the HYR1/IFF family. Post-translationally, the GPI-anchor is attached to the protein in the endoplasmic reticulum and serves to target the protein to the cell surface. There, the glucosamine-inositol phospholipid moiety is cleaved off and the GPI-modified mannoprotein is covalently attached via its lipidless GPI glycan remnant to the 1,6-beta-glucan of the outer cell wall layer.

The protein localises to the secreted. It localises to the cell wall. It is found in the membrane. Its function is as follows. GPI-anchored cell wall protein involved in cell wall organization, hyphal growth, as well as in host-fungal interaction and virulence. This is Cell wall protein IFF9 (IFF9) from Candida albicans (strain SC5314 / ATCC MYA-2876) (Yeast).